A 379-amino-acid polypeptide reads, in one-letter code: Lipoyl synthase, mitochondrial (379 aa).

The [4Fe-4S] cluster site is built by C94, C99, C105, C126, C130, C133, and S342. In terms of domain architecture, Radical SAM core spans 109–331 (GEDNGAATAT…EKEAMSMGFL (223 aa)).

The protein belongs to the radical SAM superfamily. Lipoyl synthase family. Requires [4Fe-4S] cluster as cofactor.

The protein localises to the mitochondrion. It carries out the reaction [[Fe-S] cluster scaffold protein carrying a second [4Fe-4S](2+) cluster] + N(6)-octanoyl-L-lysyl-[protein] + 2 oxidized [2Fe-2S]-[ferredoxin] + 2 S-adenosyl-L-methionine + 4 H(+) = [[Fe-S] cluster scaffold protein] + N(6)-[(R)-dihydrolipoyl]-L-lysyl-[protein] + 4 Fe(3+) + 2 hydrogen sulfide + 2 5'-deoxyadenosine + 2 L-methionine + 2 reduced [2Fe-2S]-[ferredoxin]. Its pathway is protein modification; protein lipoylation via endogenous pathway; protein N(6)-(lipoyl)lysine from octanoyl-[acyl-carrier-protein]: step 2/2. In terms of biological role, catalyzes the radical-mediated insertion of two sulfur atoms into the C-6 and C-8 positions of the octanoyl moiety bound to the lipoyl domains of lipoate-dependent enzymes, thereby converting the octanoylated domains into lipoylated derivatives. The protein is Lipoyl synthase, mitochondrial of Leishmania braziliensis.